A 149-amino-acid chain; its full sequence is SsrA-binding protein (149 aa).

It belongs to the SmpB family.

It is found in the cytoplasm. In terms of biological role, required for rescue of stalled ribosomes mediated by trans-translation. Binds to transfer-messenger RNA (tmRNA), required for stable association of tmRNA with ribosomes. tmRNA and SmpB together mimic tRNA shape, replacing the anticodon stem-loop with SmpB. tmRNA is encoded by the ssrA gene; the 2 termini fold to resemble tRNA(Ala) and it encodes a 'tag peptide', a short internal open reading frame. During trans-translation Ala-aminoacylated tmRNA acts like a tRNA, entering the A-site of stalled ribosomes, displacing the stalled mRNA. The ribosome then switches to translate the ORF on the tmRNA; the nascent peptide is terminated with the 'tag peptide' encoded by the tmRNA and targeted for degradation. The ribosome is freed to recommence translation, which seems to be the essential function of trans-translation. This Anaplasma marginale (strain Florida) protein is SsrA-binding protein.